Here is a 132-residue protein sequence, read N- to C-terminus: MSMTDPIADLLVRIKNAAAVGKQTVKLPSSKIKVAIAQVLKDEGYITDLRVTQTENNKAELEIVLKYFEGRPVIETLKRFSRSGLRQYRGKTELPKVLGGLGIAIISTSKGIMTDAQAREAGVGGEVLCFVA.

Belongs to the universal ribosomal protein uS8 family. In terms of assembly, part of the 30S ribosomal subunit. Contacts proteins S5 and S12.

One of the primary rRNA binding proteins, it binds directly to 16S rRNA central domain where it helps coordinate assembly of the platform of the 30S subunit. In Xanthomonas euvesicatoria pv. vesicatoria (strain 85-10) (Xanthomonas campestris pv. vesicatoria), this protein is Small ribosomal subunit protein uS8.